Reading from the N-terminus, the 311-residue chain is Dehydrogenase/reductase SDR family member 7C (311 aa).

The signal sequence occupies residues 1-18; that stretch reads MGVTAVLMLPLLLLGISG. 5 residues coordinate NAD(+): serine 47, leucine 49, tyrosine 191, lysine 195, and serine 226. Tyrosine 191 (proton acceptor) is an active-site residue.

It belongs to the short-chain dehydrogenases/reductases (SDR) family.

Its subcellular location is the sarcoplasmic reticulum membrane. It carries out the reaction all-trans-retinol + NAD(+) = all-trans-retinal + NADH + H(+). Its function is as follows. NADH-dependent oxidoreductase which catalyzes the oxidation of all-trans-retinol to all-trans-retinal. Plays a role in the regulation of cardiac and skeletal muscle metabolic functions. Maintains Ca(2+) intracellular homeostasis by repressing Ca(2+) release from the sarcoplasmic reticulum (SR) in myotubes, possibly through local alternations in NAD/NADH or retinol/retinal. Also plays a role in Ca(2+) homeostasis by controlling Ca(2+) overload in the cytosol and the SR in myotubes. Involved in glucose uptake into skeletal muscles and muscle performance by activating PI3K and mTORC2-mediated AKT1 phosphorylation signaling pathways, possibly through the action of its downstream catalytic product all-trans-retinoic acid. The sequence is that of Dehydrogenase/reductase SDR family member 7C (DHRS7C) from Bos taurus (Bovine).